The sequence spans 188 residues: Putative pre-16S rRNA nuclease (188 aa).

A disordered region spans residues 156–188 (LRQGDAAPGGSDDERDEDGDTDGEDGGGDGGGE). A compositionally biased stretch (acidic residues) spans 166-188 (SDDERDEDGDTDGEDGGGDGGGE).

The protein belongs to the YqgF nuclease family.

Its subcellular location is the cytoplasm. Could be a nuclease involved in processing of the 5'-end of pre-16S rRNA. This chain is Putative pre-16S rRNA nuclease, found in Rhodospirillum centenum (strain ATCC 51521 / SW).